The sequence spans 513 residues: ATP synthase subunit alpha (513 aa).

170–177 (GDRQTGKT) serves as a coordination point for ATP.

Belongs to the ATPase alpha/beta chains family. As to quaternary structure, F-type ATPases have 2 components, CF(1) - the catalytic core - and CF(0) - the membrane proton channel. CF(1) has five subunits: alpha(3), beta(3), gamma(1), delta(1), epsilon(1). CF(0) has three main subunits: a(1), b(2) and c(9-12). The alpha and beta chains form an alternating ring which encloses part of the gamma chain. CF(1) is attached to CF(0) by a central stalk formed by the gamma and epsilon chains, while a peripheral stalk is formed by the delta and b chains.

The protein localises to the cell inner membrane. The enzyme catalyses ATP + H2O + 4 H(+)(in) = ADP + phosphate + 5 H(+)(out). Its function is as follows. Produces ATP from ADP in the presence of a proton gradient across the membrane. The alpha chain is a regulatory subunit. The chain is ATP synthase subunit alpha from Teredinibacter turnerae (strain ATCC 39867 / T7901).